The chain runs to 558 residues: NAD(P)H-quinone oxidoreductase chain 4 (558 aa).

15 helical membrane passes run F25–V45, W56–G76, V90–P110, L111–F131, P133–V153, L157–W177, F189–F209, G230–V250, T264–M284, F298–F318, I327–E347, A353–A373, F397–V417, I438–M458, and V485–M505.

It belongs to the complex I subunit 4 family.

It localises to the cellular thylakoid membrane. It catalyses the reaction a plastoquinone + NADH + (n+1) H(+)(in) = a plastoquinol + NAD(+) + n H(+)(out). It carries out the reaction a plastoquinone + NADPH + (n+1) H(+)(in) = a plastoquinol + NADP(+) + n H(+)(out). Functionally, NDH-1 shuttles electrons from NAD(P)H, via FMN and iron-sulfur (Fe-S) centers, to quinones in the respiratory chain. The immediate electron acceptor for the enzyme in this species is believed to be plastoquinone. Couples the redox reaction to proton translocation (for every two electrons transferred, four hydrogen ions are translocated across the cytoplasmic membrane), and thus conserves the redox energy in a proton gradient. This Synechococcus sp. (strain CC9311) protein is NAD(P)H-quinone oxidoreductase chain 4.